The primary structure comprises 323 residues: MKKEELRLIFMGTADFAVPALRALVENGYQVKAVVTMPDKPMGRGHKVSPSMVKLYAQELGLPILQPDNLNEESFLDELRTYQPHLQIVVAFRMLPRSVWQMPPMGTINLHGSLLPMYRGAAPINHAIRHGDTETGVTTFRLRHEIDTGEVLLQEKLPIGHEETFGELYERMATLGASVLVHTVDLFLEGEPVSIPQEQLPGYVDARPAPKIFKDDCRIDWDKPAEEVHNFIRSISPAPTAWTKLHRPRMESIVLKIYRTQVIEREPRHRGRFGSIIWDKKNLDVMTRKGVIRILSLQMPGKKQMDAASFLNGFALSSDMYIE.

(6S)-5,6,7,8-tetrahydrofolate is bound at residue 113–116; the sequence is SLLP.

It belongs to the Fmt family.

It carries out the reaction L-methionyl-tRNA(fMet) + (6R)-10-formyltetrahydrofolate = N-formyl-L-methionyl-tRNA(fMet) + (6S)-5,6,7,8-tetrahydrofolate + H(+). Attaches a formyl group to the free amino group of methionyl-tRNA(fMet). The formyl group appears to play a dual role in the initiator identity of N-formylmethionyl-tRNA by promoting its recognition by IF2 and preventing the misappropriation of this tRNA by the elongation apparatus. This is Methionyl-tRNA formyltransferase from Porphyromonas gingivalis (strain ATCC BAA-308 / W83).